The following is a 590-amino-acid chain: Dystrobrevin-1 (590 aa).

Residues 1–10 (MLWSNGGGGP) are compositionally biased toward gly residues. Residues 1-25 (MLWSNGGGGPREPSSAPSPDHHRAM) are disordered. The ZZ-type zinc-finger motif lies at 259 to 315 (YHPVVCDACQVRSFTGFRYKCQRCANYQLCQSCFWRGRTSQNHSNEHEMKEYSSYKS). The Zn(2+) site is built by Cys-264, Cys-267, Cys-279, Cys-282, Cys-288, Cys-291, His-301, and His-305. Positions 434–508 (SMVGDERTLI…EHLMAQLNTG (75 aa)) form a coiled coil. The tract at residues 468–590 (DGLAGLRDRK…DENGVTINGF (123 aa)) is essential for interaction with ctn-1. Positions 484-490 (MFEMQQR) are essential for interaction with dys-1.

It belongs to the dystrophin family. Dystrobrevin subfamily. In terms of assembly, component of the dystrophin glycoprotein complex (DGC). Interacts with dystrophin (dys-1) and syntrophin (stn-1) to form the DGC. Interacts (via C-terminus) with ctn-1 (via N-terminus); the interaction is required for localization of the dystrophin complex and ctn-1 near dense bodies in muscle cells. In terms of tissue distribution, from late embryogenesis to adulthood, expressed in neurons and muscles; particularly strong in the ventral nerve cord and in muscles of the body wall, head pharyngeal, and vulva; weaker in the intestinal muscle (at protein level).

The protein localises to the cytoplasm. In terms of biological role, plays a role in cholinergic transmission and as a functional partner of dystrophin (dys-1), necessary for muscle maintenance. Required for localization of ctn-1 near dense bodies in muscle cells. The chain is Dystrobrevin-1 from Caenorhabditis elegans.